Reading from the N-terminus, the 336-residue chain is Cycloartenol-C-24-methyltransferase (336 aa).

N-acetylmethionine is present on Met1.

It belongs to the class I-like SAM-binding methyltransferase superfamily. Erg6/SMT family. In terms of tissue distribution, highly expressed in vascular tissue, mature leaves and in regions undergoing cellular expansion.

The enzyme catalyses cycloartenol + S-adenosyl-L-methionine = 24-methylenecycloartanol + S-adenosyl-L-homocysteine + H(+). It functions in the pathway steroid biosynthesis; sterol biosynthesis. In terms of biological role, catalyzes the methyl transfer from S-adenosyl-methionine to the C-24 of cycloartenol to form 24-methylene cycloartenol. The protein is Cycloartenol-C-24-methyltransferase (SMT1) of Arabidopsis thaliana (Mouse-ear cress).